We begin with the raw amino-acid sequence, 435 residues long: GTPase Obg (435 aa).

The region spanning 1–158 (MFIDRAKIYV…RWLYLELKLL (158 aa)) is the Obg domain. The OBG-type G domain occupies 159 to 328 (ADVGLVGLPN…LLELMEKYVR (170 aa)). GTP-binding positions include 165 to 172 (GLPNAGKS), 190 to 194 (FTTKT), 211 to 214 (DIPG), 280 to 283 (NKID), and 309 to 311 (SAK). Residues Ser-172 and Thr-192 each contribute to the Mg(2+) site. An OCT domain is found at 343-426 (IQETKEGRVE…IGDYIFKYNA (84 aa)).

Belongs to the TRAFAC class OBG-HflX-like GTPase superfamily. OBG GTPase family. Monomer. Mg(2+) serves as cofactor.

The protein localises to the cytoplasm. In terms of biological role, an essential GTPase which binds GTP, GDP and possibly (p)ppGpp with moderate affinity, with high nucleotide exchange rates and a fairly low GTP hydrolysis rate. Plays a role in control of the cell cycle, stress response, ribosome biogenesis and in those bacteria that undergo differentiation, in morphogenesis control. The chain is GTPase Obg from Dictyoglomus thermophilum (strain ATCC 35947 / DSM 3960 / H-6-12).